Reading from the N-terminus, the 34-residue chain is Cytochrome b6-f complex subunit 8 (34 aa).

A helical transmembrane segment spans residues 3–23; sequence IFQIGWAALAAIFTFSIAMVV.

The protein belongs to the PetN family. In terms of assembly, the 4 large subunits of the cytochrome b6-f complex are cytochrome b6, subunit IV (17 kDa polypeptide, PetD), cytochrome f and the Rieske protein, while the 4 small subunits are PetG, PetL, PetM and PetN. The complex functions as a dimer.

It is found in the cellular thylakoid membrane. In terms of biological role, component of the cytochrome b6-f complex, which mediates electron transfer between photosystem II (PSII) and photosystem I (PSI), cyclic electron flow around PSI, and state transitions. The protein is Cytochrome b6-f complex subunit 8 of Prochlorococcus marinus subsp. pastoris (strain CCMP1986 / NIES-2087 / MED4).